Here is a 220-residue protein sequence, read N- to C-terminus: Fructose-6-phosphate aldolase 2 (220 aa).

Catalysis depends on lysine 85, which acts as the Schiff-base intermediate with substrate.

The protein belongs to the transaldolase family. Type 3A subfamily. As to quaternary structure, homodecamer.

The protein localises to the cytoplasm. It carries out the reaction beta-D-fructose 6-phosphate = dihydroxyacetone + D-glyceraldehyde 3-phosphate. Its function is as follows. Catalyzes the reversible formation of fructose 6-phosphate from dihydroxyacetone and D-glyceraldehyde 3-phosphate via an aldolization reaction. Can utilize hydroxyacetone as an alternative donor substrate. Is also able to catalyze the direct self-aldol addition of glycolaldehyde. Is less catalytically efficient than the isozyme FsaA. Does not display transaldolase activity. This chain is Fructose-6-phosphate aldolase 2 (fsaB), found in Escherichia coli (strain K12).